The following is a 100-amino-acid chain: Protein E7 (100 aa).

Positions 1-43 are E7 terminal domain; the sequence is MIGKQATLRDIVLEELVQPIDLHCHEELPDLPEDIEASVVEEE. The LXCXE motif; interaction with host RB1 and TMEM173/STING motif lies at 22 to 26; that stretch reads LHCHE. A zinc finger spans residues 55–91; the sequence is CGGCEVRLKLYVWATDAGIRNLQDCLLGDVRLLCPTC. A Nuclear export signal motif is present at residues 73–81; the sequence is IRNLQDCLL.

This sequence belongs to the papillomaviridae E7 protein family. In terms of assembly, homodimer. Homooligomer. Interacts with host RB1; this interaction induces dissociation of RB1-E2F1 complex thereby disrupting RB1 activity. Interacts with host EP300; this interaction represses EP300 transcriptional activity. Interacts with protein E2; this interaction inhibits E7 oncogenic activity. Interacts with host TMEM173/STING; this interaction impairs the ability of TMEM173/STING to sense cytosolic DNA and promote the production of type I interferon (IFN-alpha and IFN-beta). Post-translationally, highly phosphorylated.

It is found in the host cytoplasm. The protein localises to the host nucleus. Functionally, plays a role in viral genome replication by driving entry of quiescent cells into the cell cycle. Stimulation of progression from G1 to S phase allows the virus to efficiently use the cellular DNA replicating machinery to achieve viral genome replication. E7 protein has both transforming and trans-activating activities. Induces the disassembly of the E2F1 transcription factor from RB1, with subsequent transcriptional activation of E2F1-regulated S-phase genes. Interferes with host histone deacetylation mediated by HDAC1 and HDAC2, leading to transcription activation. Also plays a role in the inhibition of both antiviral and antiproliferative functions of host interferon alpha. Interaction with host TMEM173/STING impairs the ability of TMEM173/STING to sense cytosolic DNA and promote the production of type I interferon (IFN-alpha and IFN-beta). The sequence is that of Protein E7 from Homo sapiens (Human).